Consider the following 394-residue polypeptide: UPF0284 protein SYNW1869 (394 aa).

This sequence belongs to the UPF0284 family.

In Parasynechococcus marenigrum (strain WH8102), this protein is UPF0284 protein SYNW1869.